Here is a 471-residue protein sequence, read N- to C-terminus: Tryptophanase (471 aa).

Residues Lys5, Lys115, and Lys156 each carry the N6-acetyllysine modification. N6-(pyridoxal phosphate)lysine is present on Lys270. Lys450 carries the N6-acetyllysine modification.

Belongs to the beta-eliminating lyase family. Homotetramer. It depends on pyridoxal 5'-phosphate as a cofactor.

The enzyme catalyses L-tryptophan + H2O = indole + pyruvate + NH4(+). The protein operates within amino-acid degradation; L-tryptophan degradation via pyruvate pathway; indole and pyruvate from L-tryptophan: step 1/1. This chain is Tryptophanase, found in Escherichia coli O139:H28 (strain E24377A / ETEC).